Here is a 1617-residue protein sequence, read N- to C-terminus: Mediator of RNA polymerase II transcription subunit 12 (1617 aa).

2 disordered regions span residues 25–114 (RADL…PSLS) and 1519–1552 (PVSI…QPAF). The segment covering 40–51 (EQPSMPVAQTQG) has biased composition (polar residues). Basic and acidic residues predominate over residues 66-80 (VLEREPPAKRLKIDV). Over residues 99–111 (SKSTPGATTSKPP) the composition is skewed to polar residues. Positions 1523 to 1543 (PSPAASGSTPAPTPSGNSTGG) are enriched in low complexity.

The protein belongs to the Mediator complex subunit 12 family. Component of the srb8-11 complex, which itself associates with the Mediator complex.

It is found in the nucleus. Component of the srb8-11 complex. The srb8-11 complex is a regulatory module of the Mediator complex which is itself involved in regulation of basal and activated RNA polymerase II-dependent transcription. The srb8-11 complex may be involved in the transcriptional repression of a subset of genes regulated by Mediator. It may inhibit the association of the Mediator complex with RNA polymerase II to form the holoenzyme complex. The sequence is that of Mediator of RNA polymerase II transcription subunit 12 (srb8) from Aspergillus fumigatus (strain ATCC MYA-4609 / CBS 101355 / FGSC A1100 / Af293) (Neosartorya fumigata).